Consider the following 228-residue polypeptide: Sec-independent protein translocase protein TatB (228 aa).

The chain crosses the membrane as a helical span at residues 1–21; sequence MFDFGLGELIFVGIIALIVLG. 2 disordered regions span residues 106–164 and 196–228; these read TPAD…TDKD and VPHT…VRKS. Residues 135 to 151 are compositionally biased toward basic and acidic residues; sequence PSERSDTSAETLGDDRQ. The segment covering 206 to 228 has biased composition (basic residues); the sequence is AINRKRDFRPKHRAKPKLRVRKS.

It belongs to the TatB family. As to quaternary structure, the Tat system comprises two distinct complexes: a TatABC complex, containing multiple copies of TatA, TatB and TatC subunits, and a separate TatA complex, containing only TatA subunits. Substrates initially bind to the TatABC complex, which probably triggers association of the separate TatA complex to form the active translocon.

It is found in the cell inner membrane. Functionally, part of the twin-arginine translocation (Tat) system that transports large folded proteins containing a characteristic twin-arginine motif in their signal peptide across membranes. Together with TatC, TatB is part of a receptor directly interacting with Tat signal peptides. TatB may form an oligomeric binding site that transiently accommodates folded Tat precursor proteins before their translocation. This Neisseria gonorrhoeae (strain ATCC 700825 / FA 1090) protein is Sec-independent protein translocase protein TatB.